The primary structure comprises 561 residues: FAD-binding monooxygenase tazF (561 aa).

FAD-binding positions include 74–77 (TWLD), 86–87 (DI), and Tyr-92. 84-86 (GCD) contacts NADP(+). Residues 212-218 (NGSSALQ) and 235-236 (RH) each bind NADP(+).

The protein belongs to the FAD-binding monooxygenase family. It depends on FAD as a cofactor.

It functions in the pathway secondary metabolite biosynthesis. FAD-binding monooxygenase; part of the gene cluster that mediates the biosynthesis of azaterrilone A and other azaphilones, a class of fungal metabolites characterized by a highly oxygenated pyrano-quinone bicyclic core and exhibiting a broad range of bioactivities. The first step of the pathway begins with the non-reducing polyketide synthase tazA that assembles one acetyl-CoA starter unit, five malonyl-CoA units, and catalyzes a series of Claisen condensations, methylation, PT-mediated cyclization, and finally releases the first hexaketide precursor through the R-domain. The tazA product then undergoes reduction on its terminal ketone and the following pyran-ring formation by yet undetermined enzyme(s). Dehydration and enoyl reduction, possibly involving the trans-enoyl reductase tazE leads to the next intermediate. TazD is predicted as an acetyltransferase and might catalyze the acetylation steps leading to the synthesis of azaterrilone A. Azaterrilone A is not the final product of the taz pathway and both the highly reducing polyketide synthase tazB and the dual enzyme tazHJ catalyze late steps of the pathway, leading to the production of the 2 final stereoisomers that contain additional polyketide modification whose structures have still to be determined. The sequence is that of FAD-binding monooxygenase tazF from Aspergillus terreus (strain NIH 2624 / FGSC A1156).